A 295-amino-acid polypeptide reads, in one-letter code: MAVVTMRQLLESGVHFGHQTRRWNPKMKRFIFTERNGIYIIDLRQTLDYIEKAYEFVRGTVAEGGSILFVGTKKQAQEAIAEQATRVGQPYVNHRWLGGMLTNFQTVYKRLQRMKELEALGDLSGTAAGYTKKETLQLNREKGKLSRTLGGLRDMQKLPAAIWVVDTKKEHIAVDEARKLGIPVIAVLDTNCDPDEVDYPIPGNDDAIRSAELLTKVVAAAVADGLIARSGRRRGTDEKPEAGVATDEPLAEWERELLEEPKKSDEQPAKSDELPVKTDEQPTKSDEQPAAAAAE.

The disordered stretch occupies residues 232 to 295 (RRRGTDEKPE…DEQPAAAAAE (64 aa)). A compositionally biased stretch (basic and acidic residues) spans 252–287 (EWERELLEEPKKSDEQPAKSDELPVKTDEQPTKSDE).

This sequence belongs to the universal ribosomal protein uS2 family.

The protein is Small ribosomal subunit protein uS2 of Salinispora tropica (strain ATCC BAA-916 / DSM 44818 / JCM 13857 / NBRC 105044 / CNB-440).